The chain runs to 1450 residues: Auxilin-like protein 1 (1450 aa).

Disordered regions lie at residues 117-142 (NEDK…GKKS), 241-318 (STRD…AESS), 357-383 (DSKI…SQIL), 459-480 (NSKQ…TKQE), 512-541 (SQKD…SQEM), 556-575 (EETP…EKSE), 908-946 (DRSE…RSSF), 961-1046 (EQHR…ELEH), 1077-1168 (GAAT…ERKQ), 1192-1241 (AGKT…AERA), and 1254-1328 (AMEK…SDRA). Positions 316 to 344 (ESSAALKKAIEEAQIRMNIAKQMMEKKKS) form a coiled coil. Positions 357 to 366 (DSKIENKGNT) are enriched in basic and acidic residues. 7 stretches are compositionally biased toward basic and acidic residues: residues 512–524 (SQKD…EKEN), 564–575 (SKSEMNIEEKSE), 908–923 (DRSE…RFDQ), 1037–1046 (RNGDKKELEH), 1117–1131 (NMKE…RSSM), 1147–1168 (ETVE…ERKQ), and 1192–1226 (AGKT…KLSS). Coiled coils occupy residues 1142–1184 (SQNK…RERA) and 1219–1257 (EVND…AMEK). Over residues 1270–1299 (SYGGSKSFSSSGERRGSSSSGTENKSSGPS) the composition is skewed to low complexity. Residues 1310 to 1328 (PIQRCKARSERHQRTSDRA) show a composition bias toward basic and acidic residues. A coiled-coil region spans residues 1327-1355 (RAAEALAEKKLRDLKTQKEQTERNRLAEA). Residues 1377-1450 (TLQYILGAES…AWNKFGADER (74 aa)) form the J domain.

This is Auxilin-like protein 1 (AUL1) from Arabidopsis thaliana (Mouse-ear cress).